The primary structure comprises 421 residues: Truncated surface protein (421 aa).

An N-terminal signal peptide occupies residues 1–31 (MRAKGTRKNYQHLWRWGTMLLGMLMICSAAE). Cys-53 and Cys-73 are oxidised to a cystine. Asn-87, Asn-97, Asn-129, Asn-135, Asn-140, Asn-151, Asn-155, Asn-183, Asn-192, Asn-229, Asn-236, Asn-257, Asn-271, Asn-284, Asn-290, Asn-296, Asn-326, Asn-333, Asn-349, and Asn-355 each carry an N-linked (GlcNAc...) asparagine; by host glycan. 5 disulfides stabilise this stretch: Cys-118-Cys-200, Cys-125-Cys-191, Cys-130-Cys-152, Cys-213-Cys-242, and Cys-223-Cys-234. The V1 stretch occupies residues 130–151 (CTDLTNATYANGSSEERGEIRN). The V2 stretch occupies residues 152–191 (CSFNVTTIIRNKIQKEYALFYRLDIVPIDKDNTSYTLINC). The interval 291–324 (CTRPNNNTKKGIAIGPGRTLYAREKIIGDIRQAH) is V3. Cys-291 and Cys-325 are disulfide-bonded. Positions 357–367 (SSGGDPEIVMH) are CD4-binding loop. The cysteines at positions 378 and 410 are disulfide-linked. The interval 378–410 (CKTTQLFNSTWLFNSTWNDTERSDNNETIIIPC) is V4. Residues Asn-385, Asn-391, Asn-395, and Asn-403 are each glycosylated (N-linked (GlcNAc...) asparagine; by host).

It is found in the virion membrane. In Human immunodeficiency virus type 1 group M subtype B (isolate NY5) (HIV-1), this protein is Truncated surface protein (env).